The following is a 471-amino-acid chain: Glutamate--tRNA ligase (471 aa).

The 'HIGH' region motif lies at 9-19 (PSPTGYLHVGG). Residues C98, C100, C125, and H127 each coordinate Zn(2+). A 'KMSKS' region motif is present at residues 237 to 241 (KLSKR). K240 is an ATP binding site.

The protein belongs to the class-I aminoacyl-tRNA synthetase family. Glutamate--tRNA ligase type 1 subfamily. In terms of assembly, monomer. It depends on Zn(2+) as a cofactor.

The protein localises to the cytoplasm. It carries out the reaction tRNA(Glu) + L-glutamate + ATP = L-glutamyl-tRNA(Glu) + AMP + diphosphate. Functionally, catalyzes the attachment of glutamate to tRNA(Glu) in a two-step reaction: glutamate is first activated by ATP to form Glu-AMP and then transferred to the acceptor end of tRNA(Glu). The protein is Glutamate--tRNA ligase of Cronobacter sakazakii (strain ATCC BAA-894) (Enterobacter sakazakii).